Reading from the N-terminus, the 246-residue chain is Probable septum site-determining protein MinC (246 aa).

It belongs to the MinC family. Interacts with MinD and FtsZ.

Its function is as follows. Cell division inhibitor that blocks the formation of polar Z ring septums. Rapidly oscillates between the poles of the cell to destabilize FtsZ filaments that have formed before they mature into polar Z rings. Prevents FtsZ polymerization. The protein is Probable septum site-determining protein MinC of Pseudomonas syringae pv. tomato (strain ATCC BAA-871 / DC3000).